The chain runs to 491 residues: Aspartyl/glutamyl-tRNA(Asn/Gln) amidotransferase subunit B (491 aa).

Belongs to the GatB/GatE family. GatB subfamily. As to quaternary structure, heterotrimer of A, B and C subunits.

It carries out the reaction L-glutamyl-tRNA(Gln) + L-glutamine + ATP + H2O = L-glutaminyl-tRNA(Gln) + L-glutamate + ADP + phosphate + H(+). It catalyses the reaction L-aspartyl-tRNA(Asn) + L-glutamine + ATP + H2O = L-asparaginyl-tRNA(Asn) + L-glutamate + ADP + phosphate + 2 H(+). Allows the formation of correctly charged Asn-tRNA(Asn) or Gln-tRNA(Gln) through the transamidation of misacylated Asp-tRNA(Asn) or Glu-tRNA(Gln) in organisms which lack either or both of asparaginyl-tRNA or glutaminyl-tRNA synthetases. The reaction takes place in the presence of glutamine and ATP through an activated phospho-Asp-tRNA(Asn) or phospho-Glu-tRNA(Gln). The chain is Aspartyl/glutamyl-tRNA(Asn/Gln) amidotransferase subunit B from Prochlorococcus marinus (strain NATL2A).